Reading from the N-terminus, the 656-residue chain is Chromosomal replication initiator protein DnaA (656 aa).

Positions 1 to 100 (MADVPADLAA…TAGEPAGPAP (100 aa)) are domain I, interacts with DnaA modulators. The disordered stretch occupies residues 91 to 313 (TAGEPAGPAP…PAPATGPGEP (223 aa)). Positions 97–109 (GPAPQAPQSPPSR) are enriched in pro residues. Positions 101 to 315 (QAPQSPPSRP…PATGPGEPTA (215 aa)) are domain II. Basic and acidic residues-rich tracts occupy residues 126–144 (GREEYRDRDEYEGYGRNRA) and 231–273 (QRGD…RDLP). A compositionally biased stretch (low complexity) spans 291-313 (GPATGAPGPLAAQPAPATGPGEP). Residues 316-532 (RLNPKYLFDT…GALIRVTAFA (217 aa)) form a domain III, AAA+ region region. ATP contacts are provided by Gly360, Gly362, Lys363, and Thr364. The tract at residues 533–656 (SLNRQPVDLG…TELTNRIKNG (124 aa)) is domain IV, binds dsDNA.

This sequence belongs to the DnaA family. Oligomerizes as a right-handed, spiral filament on DNA at oriC.

It localises to the cytoplasm. Plays an essential role in the initiation and regulation of chromosomal replication. ATP-DnaA binds to the origin of replication (oriC) to initiate formation of the DNA replication initiation complex once per cell cycle. Binds the DnaA box (a 9 base pair repeat at the origin) and separates the double-stranded (ds)DNA. Forms a right-handed helical filament on oriC DNA; dsDNA binds to the exterior of the filament while single-stranded (ss)DNA is stabiized in the filament's interior. The ATP-DnaA-oriC complex binds and stabilizes one strand of the AT-rich DNA unwinding element (DUE), permitting loading of DNA polymerase. After initiation quickly degrades to an ADP-DnaA complex that is not apt for DNA replication. Binds acidic phospholipids. The chain is Chromosomal replication initiator protein DnaA from Streptomyces coelicolor (strain ATCC BAA-471 / A3(2) / M145).